A 1074-amino-acid polypeptide reads, in one-letter code: Transmembrane protein 132E (1074 aa).

An N-terminal signal peptide occupies residues 1–25 (MAPGMSGRGGAALLCLSALLAHASG). At 26–893 (RSHPASPSPP…LTDLEIGMYA (868 aa)) the chain is on the extracellular side. N-linked (GlcNAc...) asparagine glycans are attached at residues asparagine 70 and asparagine 91. 2 disordered regions span residues 202-226 (PPAPAAPPTARRKSPDGLEPEATGE) and 241-264 (ASGGCGGSRRGAGPGVGARAESPT). A compositionally biased stretch (gly residues) spans 243 to 256 (GGCGGSRRGAGPGV). N-linked (GlcNAc...) asparagine glycans are attached at residues asparagine 318 and asparagine 399. 2 disordered regions span residues 563 to 585 (RSVRESEDEDEEEEERRQSASRG) and 814 to 867 (GRDE…VPPT). A compositionally biased stretch (low complexity) spans 841–862 (GAGPPGSALPAPEAPGPGTASP). A helical membrane pass occupies residues 894 to 914 (LLGVFCLAILVFLINCIVFVL). Over 915-1074 (RYRHKRIPPE…NYMRRIKEIA (160 aa)) the chain is Cytoplasmic. Positions 946 to 1063 (VQGELSPPAG…PTRPTAPPDL (118 aa)) are disordered. Positions 972–984 (SGSSQTSVQSQVH) are enriched in low complexity. Over residues 1034–1044 (GEEDEEEEEDL) the composition is skewed to acidic residues.

This sequence belongs to the TMEM132 family.

Its subcellular location is the membrane. Required for normal inner ear hair cell function and hearing. The protein is Transmembrane protein 132E of Homo sapiens (Human).